Here is a 431-residue protein sequence, read N- to C-terminus: UDP-N-acetylglucosamine 1-carboxyvinyltransferase (431 aa).

Lys22–Asn23 provides a ligand contact to phosphoenolpyruvate. Residue Arg93 participates in UDP-N-acetyl-alpha-D-glucosamine binding. Cys117 functions as the Proton donor in the catalytic mechanism. Position 117 is a 2-(S-cysteinyl)pyruvic acid O-phosphothioketal (Cys117). Residues Asp307 and Val329 each contribute to the UDP-N-acetyl-alpha-D-glucosamine site.

The protein belongs to the EPSP synthase family. MurA subfamily.

It localises to the cytoplasm. It carries out the reaction phosphoenolpyruvate + UDP-N-acetyl-alpha-D-glucosamine = UDP-N-acetyl-3-O-(1-carboxyvinyl)-alpha-D-glucosamine + phosphate. It functions in the pathway cell wall biogenesis; peptidoglycan biosynthesis. Functionally, cell wall formation. Adds enolpyruvyl to UDP-N-acetylglucosamine. This chain is UDP-N-acetylglucosamine 1-carboxyvinyltransferase, found in Nitrosococcus oceani (strain ATCC 19707 / BCRC 17464 / JCM 30415 / NCIMB 11848 / C-107).